The following is a 399-amino-acid chain: Carbamoyl phosphate synthase small chain (399 aa).

The interval 1–204 (MTKTTLSSDP…WNKGYTINNE (204 aa)) is CPSase. The L-glutamine site is built by Ser60, Gly256, and Gly258. In terms of domain architecture, Glutamine amidotransferase type-1 spans 208 to 396 (HIVAIDYGIK…HDLIVNYREQ (189 aa)). The Nucleophile role is filled by Cys285. Leu286, Gln289, Asn327, Gly329, and Phe330 together coordinate L-glutamine. Active-site residues include His369 and Glu371.

This sequence belongs to the CarA family. Composed of two chains; the small (or glutamine) chain promotes the hydrolysis of glutamine to ammonia, which is used by the large (or ammonia) chain to synthesize carbamoyl phosphate. Tetramer of heterodimers (alpha,beta)4.

It catalyses the reaction hydrogencarbonate + L-glutamine + 2 ATP + H2O = carbamoyl phosphate + L-glutamate + 2 ADP + phosphate + 2 H(+). The enzyme catalyses L-glutamine + H2O = L-glutamate + NH4(+). The protein operates within amino-acid biosynthesis; L-arginine biosynthesis; carbamoyl phosphate from bicarbonate: step 1/1. It participates in pyrimidine metabolism; UMP biosynthesis via de novo pathway; (S)-dihydroorotate from bicarbonate: step 1/3. Small subunit of the glutamine-dependent carbamoyl phosphate synthetase (CPSase). CPSase catalyzes the formation of carbamoyl phosphate from the ammonia moiety of glutamine, carbonate, and phosphate donated by ATP, constituting the first step of 2 biosynthetic pathways, one leading to arginine and/or urea and the other to pyrimidine nucleotides. The small subunit (glutamine amidotransferase) binds and cleaves glutamine to supply the large subunit with the substrate ammonia. This chain is Carbamoyl phosphate synthase small chain, found in Bartonella bacilliformis (strain ATCC 35685 / KC583 / Herrer 020/F12,63).